The primary structure comprises 194 residues: Probable RNA 2'-phosphotransferase (194 aa).

This sequence belongs to the KptA/TPT1 family.

In terms of biological role, removes the 2'-phosphate from RNA via an intermediate in which the phosphate is ADP-ribosylated by NAD followed by a presumed transesterification to release the RNA and generate ADP-ribose 1''-2''-cyclic phosphate (APPR&gt;P). May function as an ADP-ribosylase. The protein is Probable RNA 2'-phosphotransferase of Burkholderia lata (strain ATCC 17760 / DSM 23089 / LMG 22485 / NCIMB 9086 / R18194 / 383).